The following is a 488-amino-acid chain: Cobyric acid synthase (488 aa).

Positions 248–441 (VLRVVVPALP…VHGLFDTPAA (194 aa)) constitute a GATase cobBQ-type domain. Cys-328 serves as the catalytic Nucleophile. The active site involves His-433.

This sequence belongs to the CobB/CobQ family. CobQ subfamily.

It participates in cofactor biosynthesis; adenosylcobalamin biosynthesis. Functionally, catalyzes amidations at positions B, D, E, and G on adenosylcobyrinic A,C-diamide. NH(2) groups are provided by glutamine, and one molecule of ATP is hydrogenolyzed for each amidation. The polypeptide is Cobyric acid synthase (Burkholderia vietnamiensis (strain G4 / LMG 22486) (Burkholderia cepacia (strain R1808))).